The primary structure comprises 420 residues: Sodium-dependent phosphate transport protein 4 (420 aa).

The interval 1–21 (MATKTELSPTARESKNAQDMQ) is disordered. 4 N-linked (GlcNAc...) asparagine glycosylation sites follow: Asn49, Asn60, Asn68, and Asn77. 8 helical membrane-spanning segments follow: residues 126–146 (SIAL…GGFI), 154–174 (FVFY…FVVI), 218–238 (IWSI…MVVY), 256–276 (LLSA…GYLA), 292–314 (IATI…LNSG), 319–341 (TALL…INVL), 357–377 (GFSS…LSQD), and 385–405 (VFFL…IFGE).

This sequence belongs to the major facilitator superfamily. Sodium/anion cotransporter family. Expressed in the liver and kidney. It is detected in proximal tubules in renal cortex as well as some tubules and glomeruli, with highest expression at the apical side of proximal tubules (at protein level).

The protein resides in the endoplasmic reticulum membrane. The protein localises to the cell membrane. The enzyme catalyses urate(in) + Na(+)(out) = urate(out) + Na(+)(in). Its function is as follows. Transports organic anions in a voltage-driven, multispecific, manner, on the apical side of renal proximal tubule. In particular, participates in the secretion of urate from the cell into the lumen. Urate is the end product of purine metabolism. May have roles in the metabolism and secretion of estrone sulfate, estradiol-17-beta-glucuronide, ochratoxin A, as wells as drugs such as bumetanide. The chain is Sodium-dependent phosphate transport protein 4 (SLC17A3) from Homo sapiens (Human).